Here is a 582-residue protein sequence, read N- to C-terminus: TRAF-type zinc finger domain-containing protein 1 (582 aa).

A2 bears the N-acetylalanine mark. A TRAF-type zinc finger spans residues 27–103 (IHEIHCQRNI…DLELSILKLK (77 aa)). S191 carries the phosphoserine modification. The segment at 217-236 (EQERQERNRGQQPPKEGGEE) is disordered. A phosphoserine mark is found at S278, S320, S326, S327, S409, S415, S430, and S470. The disordered stretch occupies residues 401 to 582 (TEGIPRLDSQ…AGDAEEEEEE (182 aa)). Composition is skewed to polar residues over residues 454–471 (PINNMTATYNQLSRSTSG) and 486–495 (LSNSDSQDIQ).

In terms of assembly, interacts with MAVS, TICAM1, TRAF1, TRAF2, TRAF3. Interacts with TRAF6.

Functionally, negative feedback regulator that controls excessive innate immune responses. Regulates both Toll-like receptor 4 (TLR4) and DDX58/RIG1-like helicases (RLH) pathways. May inhibit the LTR pathway by direct interaction with TRAF6 and attenuation of NF-kappa-B activation. May negatively regulate the RLH pathway downstream from MAVS and upstream of NF-kappa-B and IRF3. This is TRAF-type zinc finger domain-containing protein 1 (TRAFD1) from Homo sapiens (Human).